The sequence spans 328 residues: UPF0421 protein SAV1889 (328 aa).

4 helical membrane passes run 19 to 39, 61 to 81, 108 to 128, and 132 to 152; these read IAIFLTAVFCMALDLTPIYAI, LPATVIGAGFAVLFTYLFGDQ, VAVLTSLAMIPGIHDAYIFNF, and TLTAIIGLVTSGLINFMVFPP.

The protein belongs to the UPF0421 family.

It is found in the cell membrane. The chain is UPF0421 protein SAV1889 from Staphylococcus aureus (strain Mu50 / ATCC 700699).